We begin with the raw amino-acid sequence, 340 residues long: S-adenosylmethionine:tRNA ribosyltransferase-isomerase (340 aa).

The protein belongs to the QueA family. In terms of assembly, monomer.

Its subcellular location is the cytoplasm. The enzyme catalyses 7-aminomethyl-7-carbaguanosine(34) in tRNA + S-adenosyl-L-methionine = epoxyqueuosine(34) in tRNA + adenine + L-methionine + 2 H(+). It functions in the pathway tRNA modification; tRNA-queuosine biosynthesis. Its function is as follows. Transfers and isomerizes the ribose moiety from AdoMet to the 7-aminomethyl group of 7-deazaguanine (preQ1-tRNA) to give epoxyqueuosine (oQ-tRNA). This Francisella tularensis subsp. tularensis (strain FSC 198) protein is S-adenosylmethionine:tRNA ribosyltransferase-isomerase.